Consider the following 416-residue polypeptide: Enterobactin exporter EntS (416 aa).

Over 1–21 (MNKQSWLLNLSLLKTHPAFRA) the chain is Cytoplasmic. Residues 22-42 (VFLARFISIVSLGLLGVAVPV) form a helical membrane-spanning segment. Residues 43–55 (QIQMMTHSTWQVG) lie on the Periplasmic side of the membrane. A helical membrane pass occupies residues 56–76 (LSVTLTGGAMFVGLMVGGVLA). Residues 77–83 (DRYERKK) lie on the Cytoplasmic side of the membrane. The helical transmembrane segment at 84–104 (VILLARGTCGIGFIGLCLNAL) threads the bilayer. Over 105-109 (LPEPS) the chain is Periplasmic. Residues 110-130 (LLAIYLLGLWDGFFASLGVTA) form a helical membrane-spanning segment. Topologically, residues 131–156 (LLAATPALVGRENLMQAGAITMLTVR) are cytoplasmic. The chain crosses the membrane as a helical span at residues 157–177 (LGSVNSPMIGGLLLAIGGVAW). Residue Asn-178 is a topological domain, periplasmic. The chain crosses the membrane as a helical span at residues 179-199 (YGLAAAGTFITLLPLLSLPAL). The Cytoplasmic segment spans residues 200–218 (PPPPQPREHPLKSLLAGFR). The chain crosses the membrane as a helical span at residues 219 to 239 (FLLASPLVGGIALLGGLLTMA). Over 240–256 (SAVRVLYPALADNWQMS) the chain is Periplasmic. Residues 257–277 (AAQIGFLYAAIPLGAAIGALT) traverse the membrane as a helical segment. Residues 278–287 (SGKLAHSARP) lie on the Cytoplasmic side of the membrane. Residues 288-307 (GLLMLLSTLGSFLAIGLFGL) form a helical membrane-spanning segment. Over 308-313 (MPMWIL) the chain is Periplasmic. The helical transmembrane segment at 314–336 (GVVCLALFGWLSAVSSLLQYTML) threads the bilayer. The Cytoplasmic portion of the chain corresponds to 337–356 (QTQTPEVMLGRINGLWTAQN). A helical transmembrane segment spans residues 357 to 377 (VTGDAIGAALLGGLGAMMTPV). Residue Ala-378 is a topological domain, periplasmic. A helical membrane pass occupies residues 379 to 399 (SASASGFGLLIIGVLLLLVLV). At 400 to 416 (ELRHFRQTPPQVTASDS) the chain is on the cytoplasmic side.

Belongs to the major facilitator superfamily. EntS (TC 2.A.1.38) family.

It localises to the cell inner membrane. Component of an export pathway for enterobactin. This chain is Enterobactin exporter EntS, found in Shigella dysenteriae serotype 1 (strain Sd197).